The chain runs to 213 residues: Riboflavin synthase (213 aa).

2 Lumazine-binding repeats span residues 1–97 and 98–195; these read MFTG…IGGH and LMSG…VDTV. 2,4-dihydroxypteridine-binding positions include 4–6, 48–50, 62–67, 101–103, Lys137, 146–148, and 160–165; these read GIV, CLT, DLMKET, GHI, SLT, and HLIPET.

In terms of assembly, homotrimer. Unlike in B.subtilis, does not interact with 6,7-dimethyl-8-ribityllumazine synthase.

The catalysed reaction is 2 6,7-dimethyl-8-(1-D-ribityl)lumazine + H(+) = 5-amino-6-(D-ribitylamino)uracil + riboflavin. It participates in cofactor biosynthesis; riboflavin biosynthesis; riboflavin from 2-hydroxy-3-oxobutyl phosphate and 5-amino-6-(D-ribitylamino)uracil: step 2/2. In terms of biological role, catalyzes the dismutation of two molecules of 6,7-dimethyl-8-ribityllumazine, resulting in the formation of riboflavin and 5-amino-6-(D-ribitylamino)uracil. The chain is Riboflavin synthase (ribC) from Escherichia coli (strain K12).